Reading from the N-terminus, the 287-residue chain is Succinate dehydrogenase [ubiquinone] iron-sulfur subunit, mitochondrial (287 aa).

A mitochondrion-targeting transit peptide spans 1–23 (MISNVLKRASVLARSNGIQSAFY). The 2Fe-2S ferredoxin-type domain maps to 51 to 140 (FQVYRYNEET…GDTVKVYPLP (90 aa)). Residues Cys-101, Cys-106, Cys-109, and Cys-121 each contribute to the [2Fe-2S] cluster site. The 4Fe-4S ferredoxin-type domain occupies 186 to 216 (NRHKLDGLYECILCACCSTSCPSYWWSEGGD). [4Fe-4S] cluster contacts are provided by Cys-196, Cys-199, and Cys-202. Residue Cys-206 coordinates [3Fe-4S] cluster. Trp-211 contributes to the a ubiquinone binding site. The [3Fe-4S] cluster site is built by Cys-257 and Cys-263. Cys-267 lines the [4Fe-4S] cluster pocket.

The protein belongs to the succinate dehydrogenase/fumarate reductase iron-sulfur protein family. Component of complex II composed of four subunits: the flavoprotein (FP) SDHA, iron-sulfur protein (IP) SDHB, and a cytochrome b composed of a large and a small subunit. [2Fe-2S] cluster is required as a cofactor. It depends on [3Fe-4S] cluster as a cofactor. The cofactor is [4Fe-4S] cluster.

Its subcellular location is the mitochondrion inner membrane. The enzyme catalyses a quinone + succinate = fumarate + a quinol. The protein operates within carbohydrate metabolism; tricarboxylic acid cycle; fumarate from succinate (eukaryal route): step 1/1. Functionally, iron-sulfur protein (IP) subunit of succinate dehydrogenase (SDH) that is involved in complex II of the mitochondrial electron transport chain and is responsible for transferring electrons from succinate to ubiquinone (coenzyme Q). This chain is Succinate dehydrogenase [ubiquinone] iron-sulfur subunit, mitochondrial (sdhB), found in Dictyostelium discoideum (Social amoeba).